Reading from the N-terminus, the 249-residue chain is 3-deoxy-manno-octulosonate cytidylyltransferase (249 aa).

It belongs to the KdsB family.

Its subcellular location is the cytoplasm. The catalysed reaction is 3-deoxy-alpha-D-manno-oct-2-ulosonate + CTP = CMP-3-deoxy-beta-D-manno-octulosonate + diphosphate. It functions in the pathway nucleotide-sugar biosynthesis; CMP-3-deoxy-D-manno-octulosonate biosynthesis; CMP-3-deoxy-D-manno-octulosonate from 3-deoxy-D-manno-octulosonate and CTP: step 1/1. It participates in bacterial outer membrane biogenesis; lipopolysaccharide biosynthesis. In terms of biological role, activates KDO (a required 8-carbon sugar) for incorporation into bacterial lipopolysaccharide in Gram-negative bacteria. In Aliivibrio fischeri (strain ATCC 700601 / ES114) (Vibrio fischeri), this protein is 3-deoxy-manno-octulosonate cytidylyltransferase.